We begin with the raw amino-acid sequence, 490 residues long: Beta-N-acetyl-D-glucosaminide beta-1,4-N-acetylglucosaminyl-transferase (490 aa).

Residues 1–30 (MYLVVCWGRVTGNMISTRHCFSRCKSRSVR) are Cytoplasmic-facing. The helical; Signal-anchor for type II membrane protein transmembrane segment at 31 to 50 (VIKATAMLFVAAMLFLALHM) threads the bilayer. N-linked (GlcNAc...) asparagine glycosylation is found at Asn-51, Asn-82, Asn-441, Asn-459, and Asn-485. The Lumenal segment spans residues 51–490 (NFSHEASQQN…YLTGNFTIIS (440 aa)).

The protein belongs to the glycosyltransferase 7 family.

The protein localises to the golgi apparatus membrane. The catalysed reaction is an N-acetyl-beta-D-glucosaminyl derivative + UDP-N-acetyl-alpha-D-glucosamine = an N-acetyl-beta-D-glucosaminyl-(1-&gt;4)-N-acetyl-beta-D-glucosaminyl derivative + UDP + H(+). Its pathway is protein modification; protein glycosylation. The protein is Beta-N-acetyl-D-glucosaminide beta-1,4-N-acetylglucosaminyl-transferase (GNT) of Lymnaea stagnalis (Great pond snail).